The sequence spans 119 residues: Large ribosomal subunit protein bL20 (119 aa).

It belongs to the bacterial ribosomal protein bL20 family.

In terms of biological role, binds directly to 23S ribosomal RNA and is necessary for the in vitro assembly process of the 50S ribosomal subunit. It is not involved in the protein synthesizing functions of that subunit. This Nitrosococcus oceani (strain ATCC 19707 / BCRC 17464 / JCM 30415 / NCIMB 11848 / C-107) protein is Large ribosomal subunit protein bL20.